The primary structure comprises 296 residues: tRNA pseudouridine synthase B (296 aa).

The active-site Nucleophile is aspartate 38.

This sequence belongs to the pseudouridine synthase TruB family. Type 1 subfamily.

The catalysed reaction is uridine(55) in tRNA = pseudouridine(55) in tRNA. Responsible for synthesis of pseudouridine from uracil-55 in the psi GC loop of transfer RNAs. This Ehrlichia chaffeensis (strain ATCC CRL-10679 / Arkansas) protein is tRNA pseudouridine synthase B.